Reading from the N-terminus, the 116-residue chain is MADLLKFVQNEFVAKKDFPDFGAGDTITVFYEIKEGEKTRTQFFKGVVIQRRGSGTTETFTIRKMSGAIGVERIFPVNLPALQKIEINKKGAVRRARIFYFRELTGKKAKIKDKRR.

It belongs to the bacterial ribosomal protein bL19 family.

This protein is located at the 30S-50S ribosomal subunit interface and may play a role in the structure and function of the aminoacyl-tRNA binding site. In Flavobacterium johnsoniae (strain ATCC 17061 / DSM 2064 / JCM 8514 / BCRC 14874 / CCUG 350202 / NBRC 14942 / NCIMB 11054 / UW101) (Cytophaga johnsonae), this protein is Large ribosomal subunit protein bL19.